A 341-amino-acid polypeptide reads, in one-letter code: Protein pelota homolog (341 aa).

The protein belongs to the eukaryotic release factor 1 family. Pelota subfamily. As to quaternary structure, monomer. Requires a divalent metal cation as cofactor.

The protein localises to the cytoplasm. Functionally, may function in recognizing stalled ribosomes, interact with stem-loop structures in stalled mRNA molecules, and effect endonucleolytic cleavage of the mRNA. May play a role in the release non-functional ribosomes and degradation of damaged mRNAs. Has endoribonuclease activity. The sequence is that of Protein pelota homolog from Sulfurisphaera tokodaii (strain DSM 16993 / JCM 10545 / NBRC 100140 / 7) (Sulfolobus tokodaii).